The chain runs to 173 residues: Superoxide dismutase [Cu-Zn] (173 aa).

Positions 1–22 are cleaved as a signal peptide; that stretch reads MNKAKTLLFTALAFGLSHQALA. Residues histidine 67, histidine 69, and histidine 92 each contribute to the Cu cation site. A disulfide bond links cysteine 74 and cysteine 169. Residues histidine 92, histidine 101, histidine 110, and aspartate 113 each coordinate Zn(2+). Histidine 147 provides a ligand contact to Cu cation.

Belongs to the Cu-Zn superoxide dismutase family. As to quaternary structure, homodimer. Cu cation is required as a cofactor. It depends on Zn(2+) as a cofactor.

It is found in the periplasm. It carries out the reaction 2 superoxide + 2 H(+) = H2O2 + O2. In terms of biological role, destroys radicals which are normally produced within the cells and which are toxic to biological systems. The sequence is that of Superoxide dismutase [Cu-Zn] (sodC) from Photobacterium leiognathi.